A 226-amino-acid chain; its full sequence is Phosphoribosylformylglycinamidine synthase subunit PurQ (226 aa).

The Glutamine amidotransferase type-1 domain maps to 2 to 226 (KFAVIQFPGS…LKNFLVTVKN (225 aa)). Residue Cys-86 is the Nucleophile of the active site. Active-site residues include His-195 and Glu-197.

As to quaternary structure, part of the FGAM synthase complex composed of 1 PurL, 1 PurQ and 2 PurS subunits.

It is found in the cytoplasm. It carries out the reaction N(2)-formyl-N(1)-(5-phospho-beta-D-ribosyl)glycinamide + L-glutamine + ATP + H2O = 2-formamido-N(1)-(5-O-phospho-beta-D-ribosyl)acetamidine + L-glutamate + ADP + phosphate + H(+). The enzyme catalyses L-glutamine + H2O = L-glutamate + NH4(+). It participates in purine metabolism; IMP biosynthesis via de novo pathway; 5-amino-1-(5-phospho-D-ribosyl)imidazole from N(2)-formyl-N(1)-(5-phospho-D-ribosyl)glycinamide: step 1/2. Part of the phosphoribosylformylglycinamidine synthase complex involved in the purines biosynthetic pathway. Catalyzes the ATP-dependent conversion of formylglycinamide ribonucleotide (FGAR) and glutamine to yield formylglycinamidine ribonucleotide (FGAM) and glutamate. The FGAM synthase complex is composed of three subunits. PurQ produces an ammonia molecule by converting glutamine to glutamate. PurL transfers the ammonia molecule to FGAR to form FGAM in an ATP-dependent manner. PurS interacts with PurQ and PurL and is thought to assist in the transfer of the ammonia molecule from PurQ to PurL. In Lactococcus lactis subsp. cremoris (Streptococcus cremoris), this protein is Phosphoribosylformylglycinamidine synthase subunit PurQ.